The following is a 237-amino-acid chain: Uridylate kinase (237 aa).

12-15 is a binding site for ATP; the sequence is KLSG. The involved in allosteric activation by GTP stretch occupies residues 20-25; that stretch reads GDEGFG. Glycine 54 serves as a coordination point for UMP. The ATP site is built by glycine 55 and arginine 59. Residues aspartate 74 and 135–142 each bind UMP; that span reads TGSPFFTT. The ATP site is built by threonine 162, tyrosine 168, and aspartate 171.

This sequence belongs to the UMP kinase family. Homohexamer.

Its subcellular location is the cytoplasm. The catalysed reaction is UMP + ATP = UDP + ADP. It functions in the pathway pyrimidine metabolism; CTP biosynthesis via de novo pathway; UDP from UMP (UMPK route): step 1/1. With respect to regulation, allosterically activated by GTP. Inhibited by UTP. Functionally, catalyzes the reversible phosphorylation of UMP to UDP. The protein is Uridylate kinase of Actinobacillus pleuropneumoniae serotype 5b (strain L20).